The sequence spans 313 residues: Porphobilinogen deaminase (313 aa).

Residue Cys-241 is modified to S-(dipyrrolylmethanemethyl)cysteine.

This sequence belongs to the HMBS family. As to quaternary structure, monomer. Dipyrromethane serves as cofactor.

It carries out the reaction 4 porphobilinogen + H2O = hydroxymethylbilane + 4 NH4(+). Its pathway is porphyrin-containing compound metabolism; protoporphyrin-IX biosynthesis; coproporphyrinogen-III from 5-aminolevulinate: step 2/4. It functions in the pathway porphyrin-containing compound metabolism; chlorophyll biosynthesis. In terms of biological role, tetrapolymerization of the monopyrrole PBG into the hydroxymethylbilane pre-uroporphyrinogen in several discrete steps. The protein is Porphobilinogen deaminase of Chlorobium phaeobacteroides (strain BS1).